A 314-amino-acid polypeptide reads, in one-letter code: 4-hydroxy-3-methylbut-2-enyl diphosphate reductase (314 aa).

Cysteine 12 lines the [4Fe-4S] cluster pocket. (2E)-4-hydroxy-3-methylbut-2-enyl diphosphate-binding residues include histidine 41 and histidine 74. Residues histidine 41 and histidine 74 each contribute to the dimethylallyl diphosphate site. Isopentenyl diphosphate-binding residues include histidine 41 and histidine 74. Residue cysteine 96 participates in [4Fe-4S] cluster binding. Histidine 124 contacts (2E)-4-hydroxy-3-methylbut-2-enyl diphosphate. A dimethylallyl diphosphate-binding site is contributed by histidine 124. Residue histidine 124 participates in isopentenyl diphosphate binding. Glutamate 126 (proton donor) is an active-site residue. Threonine 167 lines the (2E)-4-hydroxy-3-methylbut-2-enyl diphosphate pocket. Residue cysteine 197 participates in [4Fe-4S] cluster binding. Positions 225, 226, 227, and 269 each coordinate (2E)-4-hydroxy-3-methylbut-2-enyl diphosphate. Residues serine 225, serine 226, asparagine 227, and serine 269 each contribute to the dimethylallyl diphosphate site. Positions 225, 226, 227, and 269 each coordinate isopentenyl diphosphate.

The protein belongs to the IspH family. Requires [4Fe-4S] cluster as cofactor.

It catalyses the reaction isopentenyl diphosphate + 2 oxidized [2Fe-2S]-[ferredoxin] + H2O = (2E)-4-hydroxy-3-methylbut-2-enyl diphosphate + 2 reduced [2Fe-2S]-[ferredoxin] + 2 H(+). The catalysed reaction is dimethylallyl diphosphate + 2 oxidized [2Fe-2S]-[ferredoxin] + H2O = (2E)-4-hydroxy-3-methylbut-2-enyl diphosphate + 2 reduced [2Fe-2S]-[ferredoxin] + 2 H(+). It participates in isoprenoid biosynthesis; dimethylallyl diphosphate biosynthesis; dimethylallyl diphosphate from (2E)-4-hydroxy-3-methylbutenyl diphosphate: step 1/1. Its pathway is isoprenoid biosynthesis; isopentenyl diphosphate biosynthesis via DXP pathway; isopentenyl diphosphate from 1-deoxy-D-xylulose 5-phosphate: step 6/6. In terms of biological role, catalyzes the conversion of 1-hydroxy-2-methyl-2-(E)-butenyl 4-diphosphate (HMBPP) into a mixture of isopentenyl diphosphate (IPP) and dimethylallyl diphosphate (DMAPP). Acts in the terminal step of the DOXP/MEP pathway for isoprenoid precursor biosynthesis. The protein is 4-hydroxy-3-methylbut-2-enyl diphosphate reductase of Haemophilus influenzae (strain 86-028NP).